We begin with the raw amino-acid sequence, 267 residues long: Phosphoinositide-3-kinase-interacting protein 1 (267 aa).

The N-terminal stretch at 1–21 (MLLAWVHTFLLSNMLLAEAYG) is a signal peptide. Residues 22-172 (SGGCFWDNGH…NSKEKKDLGT (151 aa)) are Extracellular-facing. The Kringle domain maps to 24-101 (GCFWDNGHLY…EKRPCEDLRC (78 aa)). 3 cysteine pairs are disulfide-bonded: C25–C101, C46–C82, and C70–C96. Basic and acidic residues predominate over residues 91–101 (PEKRPCEDLRC). The interval 91–122 (PEKRPCEDLRCPETTSQAPPPPPPSSTTELEE) is disordered. Residues 173 to 193 (LGYVLGVTMTVIIIAIGVGIV) form a helical membrane-spanning segment. At 194–267 (LGYTYKRGKD…LTDQAGTPGA (74 aa)) the chain is on the cytoplasmic side.

It is found in the cell membrane. Its function is as follows. Negative regulator of hepatic phosphatidylinositol 3-kinase (PI3K) activity. This chain is Phosphoinositide-3-kinase-interacting protein 1 (Pik3ip1), found in Rattus norvegicus (Rat).